Reading from the N-terminus, the 143-residue chain is Spore coat protein P (143 aa).

Residues 34-143 (FFDSEASTFV…VETVAFNKGL (110 aa)) form the sHSP domain.

The protein belongs to the small heat shock protein (HSP20) family.

The polypeptide is Spore coat protein P (cotP) (Bacillus subtilis (strain 168)).